Reading from the N-terminus, the 320-residue chain is Ferrochelatase (320 aa).

Positions 194 and 275 each coordinate Fe cation.

This sequence belongs to the ferrochelatase family. In terms of assembly, monomer.

The protein localises to the cytoplasm. It catalyses the reaction heme b + 2 H(+) = protoporphyrin IX + Fe(2+). The protein operates within porphyrin-containing compound metabolism; protoheme biosynthesis; protoheme from protoporphyrin-IX: step 1/1. Functionally, catalyzes the ferrous insertion into protoporphyrin IX. This is Ferrochelatase from Escherichia coli (strain 55989 / EAEC).